Here is a 696-residue protein sequence, read N- to C-terminus: Mitosis initiation protein fs(1)Ya (696 aa).

3 disordered regions span residues 245–285 (NAST…RAWK), 336–379 (EHSS…YSTS), and 457–492 (IKFE…TPEI). 2 stretches are compositionally biased toward low complexity: residues 270-281 (QQQQQQQQPLQQ) and 361-379 (SESS…YSTS). Residues 448–696 (TGAGINKKQI…REPIERMRRQ (249 aa)) are rich in charged AA. Phosphothreonine occurs at positions 478, 484, and 489. 2 consecutive short sequence motifs (nuclear localization signal) follow at residues 512-520 (PKKDKPKEK) and 534-538 (QPRVR). Disordered stretches follow at residues 555-586 (DVGE…KLEA) and 603-696 (PASL…MRRQ). The segment covering 557–569 (GEPEVVDAEEEDE) has biased composition (acidic residues). 2 stretches are compositionally biased toward basic and acidic residues: residues 607 to 624 (RGER…DKEN) and 685 to 696 (RPREPIERMRRQ).

Its subcellular location is the nucleus envelope. The protein localises to the nucleus. It localises to the nucleoplasm. It is found in the cytoplasm. In terms of biological role, cell cycle-dependent nuclear envelope component required for embryonic mitosis. The sequence is that of Mitosis initiation protein fs(1)Ya (fs(1)Ya) from Drosophila melanogaster (Fruit fly).